The sequence spans 485 residues: Adenosylhomocysteinase (485 aa).

Positions 64, 139, and 205 each coordinate substrate. Residue Thr206 to Thr208 coordinates NAD(+). Residues Lys235 and Asp239 each coordinate substrate. Residues Asn240, Gly269–Gly274, Glu292, Asn327, and Ile348–His350 each bind NAD(+).

Belongs to the adenosylhomocysteinase family. In terms of assembly, homotetramer. It depends on NAD(+) as a cofactor.

The enzyme catalyses S-adenosyl-L-homocysteine + H2O = L-homocysteine + adenosine. The protein operates within amino-acid biosynthesis; L-homocysteine biosynthesis; L-homocysteine from S-adenosyl-L-homocysteine: step 1/1. Adenosylhomocysteine is a competitive inhibitor of S-adenosyl-L-methionine-dependent methyl transferase reactions; therefore adenosylhomocysteinase may play a key role in the control of methylations via regulation of the intracellular concentration of adenosylhomocysteine. This chain is Adenosylhomocysteinase (SAHH), found in Mesembryanthemum crystallinum (Common ice plant).